The sequence spans 492 residues: Catalase isozyme 1 (492 aa).

Residues His-65 and Asn-138 contribute to the active site. Tyr-348 contributes to the heme binding site.

It belongs to the catalase family. Homotetramer. It depends on heme as a cofactor. Scutella, milky endosperm of immature kernels, leaves and epicotyls.

Its subcellular location is the peroxisome. The catalysed reaction is 2 H2O2 = O2 + 2 H2O. Functionally, occurs in almost all aerobically respiring organisms and serves to protect cells from the toxic effects of hydrogen peroxide. The polypeptide is Catalase isozyme 1 (CAT1) (Zea mays (Maize)).